The following is a 192-amino-acid chain: Erythropoietin (192 aa).

The N-terminal stretch at 1–26 is a signal peptide; that stretch reads MGVPDCLALPLLVTFLLLSLGLPVLG. Cys-33 and Cys-187 are joined by a disulfide. 3 N-linked (GlcNAc...) asparagine glycosylation sites follow: Asn-50, Asn-64, and Asn-109.

It belongs to the EPO/TPO family.

Its subcellular location is the secreted. Hormone involved in the regulation of erythrocyte proliferation and differentiation and the maintenance of a physiological level of circulating erythrocyte mass. Binds to EPOR leading to EPOR dimerization and JAK2 activation thereby activating specific downstream effectors, including STAT1 and STAT3. The sequence is that of Erythropoietin (EPO) from Spalax golani (Golan Heights blind mole rat).